A 320-amino-acid chain; its full sequence is Thymidylate synthase (320 aa).

Residues Arg-27 and 182–183 (RR) each bind dUMP. Residue Cys-202 is the Nucleophile of the active site. DUMP-binding positions include 222–225 (RSAD), Asn-233, and 263–265 (HIY). Residue Asp-225 participates in (6R)-5,10-methylene-5,6,7,8-tetrahydrofolate binding. A (6R)-5,10-methylene-5,6,7,8-tetrahydrofolate-binding site is contributed by Ala-319.

The protein belongs to the thymidylate synthase family. Bacterial-type ThyA subfamily. Homodimer.

The protein resides in the cytoplasm. The catalysed reaction is dUMP + (6R)-5,10-methylene-5,6,7,8-tetrahydrofolate = 7,8-dihydrofolate + dTMP. It functions in the pathway pyrimidine metabolism; dTTP biosynthesis. Functionally, catalyzes the reductive methylation of 2'-deoxyuridine-5'-monophosphate (dUMP) to 2'-deoxythymidine-5'-monophosphate (dTMP) while utilizing 5,10-methylenetetrahydrofolate (mTHF) as the methyl donor and reductant in the reaction, yielding dihydrofolate (DHF) as a by-product. This enzymatic reaction provides an intracellular de novo source of dTMP, an essential precursor for DNA biosynthesis. In Limosilactobacillus reuteri (strain DSM 20016) (Lactobacillus reuteri), this protein is Thymidylate synthase.